Here is a 272-residue protein sequence, read N- to C-terminus: Thiazole synthase (272 aa).

Catalysis depends on Lys111, which acts as the Schiff-base intermediate with DXP. 1-deoxy-D-xylulose 5-phosphate contacts are provided by residues Gly172, Ala198 to Gly199, and Asn220 to Ser221. Positions Ser249–Gln272 are disordered. A compositionally biased stretch (polar residues) spans Ala258–Gln272.

The protein belongs to the ThiG family. In terms of assembly, homotetramer. Forms heterodimers with either ThiH or ThiS.

It is found in the cytoplasm. The catalysed reaction is [ThiS sulfur-carrier protein]-C-terminal-Gly-aminoethanethioate + 2-iminoacetate + 1-deoxy-D-xylulose 5-phosphate = [ThiS sulfur-carrier protein]-C-terminal Gly-Gly + 2-[(2R,5Z)-2-carboxy-4-methylthiazol-5(2H)-ylidene]ethyl phosphate + 2 H2O + H(+). It functions in the pathway cofactor biosynthesis; thiamine diphosphate biosynthesis. In terms of biological role, catalyzes the rearrangement of 1-deoxy-D-xylulose 5-phosphate (DXP) to produce the thiazole phosphate moiety of thiamine. Sulfur is provided by the thiocarboxylate moiety of the carrier protein ThiS. In vitro, sulfur can be provided by H(2)S. The protein is Thiazole synthase of Synechococcus sp. (strain CC9605).